The primary structure comprises 515 residues: Pescadillo homolog (515 aa).

The stretch at Glu-270–Lys-327 forms a coiled coil. In terms of domain architecture, BRCT spans Arg-318–Pro-411. The interval Arg-477–Ser-515 is disordered. Residues His-484–Lys-501 are compositionally biased toward basic residues.

The protein belongs to the pescadillo family.

It localises to the nucleus. It is found in the nucleolus. Its subcellular location is the nucleoplasm. In terms of biological role, required for maturation of ribosomal RNAs and formation of the large ribosomal subunit. The chain is Pescadillo homolog from Nematostella vectensis (Starlet sea anemone).